The primary structure comprises 240 residues: Uridylate kinase (240 aa).

Lysine 12–glycine 15 serves as a coordination point for ATP. The involved in allosteric activation by GTP stretch occupies residues glycine 20–glycine 25. Residue glycine 54 coordinates UMP. Glycine 55 and arginine 59 together coordinate ATP. UMP-binding positions include aspartate 74 and threonine 135 to threonine 142. Residues asparagine 163, tyrosine 169, and aspartate 172 each coordinate ATP.

It belongs to the UMP kinase family. In terms of assembly, homohexamer.

Its subcellular location is the cytoplasm. It carries out the reaction UMP + ATP = UDP + ADP. It participates in pyrimidine metabolism; CTP biosynthesis via de novo pathway; UDP from UMP (UMPK route): step 1/1. Its activity is regulated as follows. Allosterically activated by GTP. Inhibited by UTP. Functionally, catalyzes the reversible phosphorylation of UMP to UDP. The polypeptide is Uridylate kinase (Oceanobacillus iheyensis (strain DSM 14371 / CIP 107618 / JCM 11309 / KCTC 3954 / HTE831)).